A 397-amino-acid polypeptide reads, in one-letter code: P2X purinoceptor 3 (397 aa).

The Cytoplasmic segment spans residues M1 to S20. The chain crosses the membrane as a helical span at residues W21–F43. Over L44–I322 the chain is Extracellular. Residues K63 and K65 each contribute to the ATP site. 3 disulfide bridges follow: C107-C153, C116-C137, and C122-C147. E111 contributes to the Mg(2+) binding site. Residue N139 is glycosylated (N-linked (GlcNAc...) asparagine). Residue D158 participates in Mg(2+) binding. A Ca(2+)-binding site is contributed by D158. N170 carries N-linked (GlcNAc...) asparagine glycosylation. An ATP-binding site is contributed by T172. N194 carries N-linked (GlcNAc...) asparagine glycosylation. 2 disulfides stabilise this stretch: C203–C213 and C247–C256. Positions 275, 279, and 281 each coordinate ATP. An N-linked (GlcNAc...) asparagine glycan is attached at N290. K299 contributes to the ATP binding site. The chain crosses the membrane as a helical span at residues I323–I341. Topologically, residues I342–H397 are cytoplasmic.

The protein belongs to the P2X receptor family. Homotrimer. Forms heterotrimer with P2RX2. Heterotrimeric P2RX2/3 has a ligand dose-response profile that is distinct from either homotrimeric P2RX2 or P2RX3.

It is found in the cell membrane. It carries out the reaction Ca(2+)(in) = Ca(2+)(out). The catalysed reaction is Na(+)(in) = Na(+)(out). With respect to regulation, has high sensitivity to ATP. Fast activation by external ATP. Exhibits rapid desensitization. Sensitives to the ATP agonist:alpha/beta-methylene-ATP. Subject to allosteric inhibition by AF-219. Mg(2+) and Ca(2+) slow deactivation of P2RX3. Functionally, extracellular ATP-activated non-selective cation channel. Plays particularly important role in sensory neurons where its activation is critical for gustatory, nociceptive responses, visceral reflexes and sensory hypersensitization. In Mus musculus (Mouse), this protein is P2X purinoceptor 3 (P2rx3).